The sequence spans 394 residues: Elongation factor Tu-A (394 aa).

The tr-type G domain maps to lysine 10 to glutamate 204. A G1 region spans residues glycine 19–threonine 26. Glycine 19 to threonine 26 is a GTP binding site. Threonine 26 is a Mg(2+) binding site. The G2 stretch occupies residues glycine 60–asparagine 64. The G3 stretch occupies residues aspartate 81 to glycine 84. Residues aspartate 81–histidine 85 and asparagine 136–aspartate 139 contribute to the GTP site. The segment at asparagine 136–aspartate 139 is G4. The interval serine 174–leucine 176 is G5.

Belongs to the TRAFAC class translation factor GTPase superfamily. Classic translation factor GTPase family. EF-Tu/EF-1A subfamily. Monomer.

Its subcellular location is the cytoplasm. It catalyses the reaction GTP + H2O = GDP + phosphate + H(+). In terms of biological role, GTP hydrolase that promotes the GTP-dependent binding of aminoacyl-tRNA to the A-site of ribosomes during protein biosynthesis. The polypeptide is Elongation factor Tu-A (Vibrio cholerae serotype O1 (strain ATCC 39315 / El Tor Inaba N16961)).